The chain runs to 420 residues: UDP-N-acetylglucosamine 1-carboxyvinyltransferase (420 aa).

22-23 (KN) serves as a coordination point for phosphoenolpyruvate. UDP-N-acetyl-alpha-D-glucosamine is bound at residue arginine 94. Cysteine 118 serves as the catalytic Proton donor. Cysteine 118 carries the 2-(S-cysteinyl)pyruvic acid O-phosphothioketal modification. Aspartate 307 and isoleucine 329 together coordinate UDP-N-acetyl-alpha-D-glucosamine.

Belongs to the EPSP synthase family. MurA subfamily.

Its subcellular location is the cytoplasm. The enzyme catalyses phosphoenolpyruvate + UDP-N-acetyl-alpha-D-glucosamine = UDP-N-acetyl-3-O-(1-carboxyvinyl)-alpha-D-glucosamine + phosphate. It functions in the pathway cell wall biogenesis; peptidoglycan biosynthesis. Its function is as follows. Cell wall formation. Adds enolpyruvyl to UDP-N-acetylglucosamine. In Granulibacter bethesdensis (strain ATCC BAA-1260 / CGDNIH1), this protein is UDP-N-acetylglucosamine 1-carboxyvinyltransferase.